Here is a 234-residue protein sequence, read N- to C-terminus: Carboxy-S-adenosyl-L-methionine synthase (234 aa).

Residues Tyr-35, 60-62, 83-84, 109-110, Asn-124, and Arg-191 each bind S-adenosyl-L-methionine; these read GCS, DN, and DI.

The protein belongs to the class I-like SAM-binding methyltransferase superfamily. Cx-SAM synthase family. As to quaternary structure, homodimer.

It catalyses the reaction prephenate + S-adenosyl-L-methionine = carboxy-S-adenosyl-L-methionine + 3-phenylpyruvate + H2O. Its function is as follows. Catalyzes the conversion of S-adenosyl-L-methionine (SAM) to carboxy-S-adenosyl-L-methionine (Cx-SAM). In Campylobacter hominis (strain ATCC BAA-381 / DSM 21671 / CCUG 45161 / LMG 19568 / NCTC 13146 / CH001A), this protein is Carboxy-S-adenosyl-L-methionine synthase.